We begin with the raw amino-acid sequence, 252 residues long: Chitooligosaccharide deacetylase (252 aa).

The Mg(2+) site is built by H61 and H125.

Belongs to the YdjC deacetylase family. ChbG subfamily. Homodimer. Mg(2+) serves as cofactor.

It localises to the cytoplasm. The catalysed reaction is N,N'-diacetylchitobiose + H2O = N-acetyl-beta-D-glucosaminyl-(1-&gt;4)-D-glucosamine + acetate. The enzyme catalyses diacetylchitobiose-6'-phosphate + H2O = N'-monoacetylchitobiose-6'-phosphate + acetate. The protein operates within glycan degradation; chitin degradation. In terms of biological role, involved in the degradation of chitin. ChbG is essential for growth on the acetylated chitooligosaccharides chitobiose and chitotriose but is dispensable for growth on cellobiose and chitosan dimer, the deacetylated form of chitobiose. Deacetylation of chitobiose-6-P and chitotriose-6-P is necessary for both the activation of the chb promoter by the regulatory protein ChbR and the hydrolysis of phosphorylated beta-glucosides by the phospho-beta-glucosidase ChbF. Catalyzes the removal of only one acetyl group from chitobiose-6-P to yield monoacetylchitobiose-6-P, the inducer of ChbR and the substrate of ChbF. The sequence is that of Chitooligosaccharide deacetylase from Klebsiella pneumoniae (strain 342).